The following is a 310-amino-acid chain: Olfactory receptor 5P52 (310 aa).

Over 1–25 the chain is Extracellular; the sequence is MEAENHTTVAELIILGLTEDPKLCI. Asn-5 carries an N-linked (GlcNAc...) asparagine glycan. A helical membrane pass occupies residues 26–46; sequence VFFVIFLGVYIITLVGNISII. Residues 47–54 are Cytoplasmic-facing; that stretch reads TLIRISSQ. Residues 55-75 form a helical membrane-spanning segment; the sequence is LHTPMYLFLSHLAFVDIVFST. Residues 76 to 99 lie on the Extracellular side of the membrane; the sequence is SVSVIMLMELLGHGLVLSVATCAA. Cys-97 and Cys-189 are joined by a disulfide. Residues 100–120 form a helical membrane-spanning segment; it reads QLCMTVSFGSAECFLLAAMAY. The Cytoplasmic portion of the chain corresponds to 121-133; the sequence is DRYVAICSPLLYS. The helical transmembrane segment at 134-154 threads the bilayer; that stretch reads TLMSSRVCFLLLGISYVGGFV. The Extracellular segment spans residues 155–196; it reads NGWTFTGCVLSLSFCGPTQINHFFCDFSPLLKVSCSDVSIIG. The chain crosses the membrane as a helical span at residues 197–217; the sequence is IIPSISSGSIIVVTVFVIAVS. Over 218-237 the chain is Cytoplasmic; it reads YIYILITILKMRSTEGRHKA. A helical membrane pass occupies residues 238-258; that stretch reads FSTCTSHLTAVTLFYGTITVI. The Extracellular portion of the chain corresponds to 259 to 271; sequence YVMPKSSYSTEQN. The helical transmembrane segment at 272-292 threads the bilayer; that stretch reads KVISLFYTVVIPMLNPLIYSL. Topologically, residues 293–310 are cytoplasmic; that stretch reads RNRDVKDALRKAIVRVYS.

This sequence belongs to the G-protein coupled receptor 1 family.

It is found in the cell membrane. Potential odorant receptor. The polypeptide is Olfactory receptor 5P52 (Mus musculus (Mouse)).